The sequence spans 332 residues: MKVTFEQLKAAFNRVLISRGVDSETADACAEMFARTTESGVYSHGVNRFPRFIQQLENGDIIPDAQPKRITSLGAIEQWDAQRSIGNLTAKKMMDRAIELAADHGIGLVALRNANHWMRGGSYGWQAAEKGYIGICWTNSIAVMPPWGAKECRIGTNPLIVAIPSTPITMVDMSMSMFSYGMLEVNRLAGRQLPVDGGFDDEGNLTKEPGVIEKNRRILPMGYWKGSGMSIVLDMIATLLSDGASVAEVTEDNSDEYGISQIFIAIEVDKLIDGPTRDAKLQRIMDYVTSAERADENQAIRLPGHEFTTLLAENRRNGITVDDSVWAKIQAL.

The active-site Proton donor is H44. Residues 168-174, 224-225, and 304-306 contribute to the NAD(+) site; these read ITMVDMS, WK, and GHE.

It belongs to the LDH2/MDH2 oxidoreductase family. DlgD subfamily. In terms of assembly, homodimer.

Its subcellular location is the cytoplasm. It carries out the reaction 3-dehydro-L-gulonate + NAD(+) = 2,3-dioxo-L-gulonate + NADH + H(+). The enzyme catalyses 3-dehydro-L-gulonate + NADP(+) = 2,3-dioxo-L-gulonate + NADPH + H(+). Its function is as follows. Catalyzes the reduction of 2,3-diketo-L-gulonate in the presence of NADH, to form 3-keto-L-gulonate. This chain is 2,3-diketo-L-gulonate reductase, found in Escherichia coli O81 (strain ED1a).